The primary structure comprises 236 residues: MTDLNELKLFATTPHPCSYLDDRDATTVFIDPEVSVDQNLYSQLTNYGFRRSGKHIYRPACKTCQACIPIRVDVETFTPNRSQQRCLRKNKDLTVTVVSTIDTDEHYTLYAKYIERRHSDGDMYPPKRDEYRSFLSAQWGVTKYLEFRNSENSLIGVAVADQLKNGISAVYTFFDPNEQKRSLGVYAVLAQIEWAQKQSNRYVYLGYWIKECQKMSYKTLYKPFELFINNQWLTFI.

It belongs to the R-transferase family. Bpt subfamily.

The protein localises to the cytoplasm. It carries out the reaction N-terminal L-glutamyl-[protein] + L-leucyl-tRNA(Leu) = N-terminal L-leucyl-L-glutamyl-[protein] + tRNA(Leu) + H(+). The catalysed reaction is N-terminal L-aspartyl-[protein] + L-leucyl-tRNA(Leu) = N-terminal L-leucyl-L-aspartyl-[protein] + tRNA(Leu) + H(+). In terms of biological role, functions in the N-end rule pathway of protein degradation where it conjugates Leu from its aminoacyl-tRNA to the N-termini of proteins containing an N-terminal aspartate or glutamate. The protein is Aspartate/glutamate leucyltransferase of Saccharophagus degradans (strain 2-40 / ATCC 43961 / DSM 17024).